The following is a 283-amino-acid chain: NADPH-dependent 7-cyano-7-deazaguanine reductase (283 aa).

Ile90–Ser92 contributes to the substrate binding site. Residue Ser92–Lys93 participates in NADPH binding. Cys191 serves as the catalytic Thioimide intermediate. The active-site Proton donor is Asp198. His230–Glu231 is a substrate binding site. NADPH is bound at residue Arg259–Gly260.

The protein belongs to the GTP cyclohydrolase I family. QueF type 2 subfamily. In terms of assembly, homodimer.

The protein localises to the cytoplasm. It carries out the reaction 7-aminomethyl-7-carbaguanine + 2 NADP(+) = 7-cyano-7-deazaguanine + 2 NADPH + 3 H(+). The protein operates within tRNA modification; tRNA-queuosine biosynthesis. Catalyzes the NADPH-dependent reduction of 7-cyano-7-deazaguanine (preQ0) to 7-aminomethyl-7-deazaguanine (preQ1). The polypeptide is NADPH-dependent 7-cyano-7-deazaguanine reductase (Tolumonas auensis (strain DSM 9187 / NBRC 110442 / TA 4)).